The sequence spans 216 residues: Sarcospan (216 aa).

Over 1-26 the chain is Cytoplasmic; that stretch reads MGRKPSPRAQELPEEEARTCCGCRFP. A helical membrane pass occupies residues 27–47; the sequence is LLLALLQLALGIAVTVLGFLM. The Extracellular portion of the chain corresponds to 48–59; it reads ASISPSLLVRDT. The helical transmembrane segment at 60 to 80 threads the bilayer; it reads PFWAGSIVCVVAYLGLFMLCV. Topologically, residues 81 to 95 are cytoplasmic; that stretch reads SYQVDERTCVQFSMK. A helical transmembrane segment spans residues 96–116; the sequence is VFYFLLSALGLMVCMLAVAFA. At 117–166 the chain is on the extracellular side; it reads AHHYSLLAQFTCETSLDSCQCKLPSSEPLSRAFVYRDVTDCTSVTGTFKL. Residues 167 to 187 traverse the membrane as a helical segment; it reads FLIIQMVLNLVCGLVCLLACF. At 188-216 the chain is on the cytoplasmic side; that stretch reads VMWKHRYQVFYVGVGLRSLMASDGQLPKA.

The protein localises to the cell membrane. It localises to the sarcolemma. The protein resides in the postsynaptic cell membrane. Functionally, component of the dystrophin-glycoprotein complex (DGC), a complex that spans the muscle plasma membrane and forms a link between the F-actin cytoskeleton and the extracellular matrix. Preferentially associates with the sarcoglycan subcomplex of the DGC. The chain is Sarcospan (Sspn) from Mus musculus (Mouse).